The sequence spans 1550 residues: MPEVRSSTQSESGMSQWMGKILSIRGAGLTIGVFGLCALIAATSVTLPPEQQLIVAFVCVVIFFIVGHKPSRRSQIFLEVLSGLVSLRYLTWRLTETLSFDTWLQGLLGTMLLVAELYALMMLFLSYFQTIAPLHRAPLPLPPNPDEWPTVDIFVPTYNEELSIVRLTVLGSLGIDWPPEKVRVHILDDGRRPEFAAFAAECGANYIARPTNEHAKAGNLNYAIGHTDGDYILIFDCDHVPTRAFLQLTMGWMVEDPKIALMQTPHHFYSPDPFQRNLSAGYRTPPEGNLFYGVVQDGNDFWDATFFCGSCAILRRTAIEQIGGFATQTVTEDAHTALKMQRLGWSTAYLRIPLAGGLATERLILHIGQRVRWARGMLQIFRIDNPLFGRGLSWGQRLCYLSAMTSFLFAVPRVIFLSSPLAFLFFGQNIIAASPLALLAYAIPHMFHAVGTASKINKGWRYSFWSEVYETTMALFLVRVTIVTLLSPSRGKFNVTDKGGLLEKGYFDLGAVYPNIILGLIMFGGLARGVYELSFGHLDQIAERAYLLNSAWAMLSLIIILAAIAVGRETQQKRNSHRIPATIPVEVANADGSIIVTGVTEDLSMGGAAVKMSWPAKLSGPTPVYIRTVLDGEELILPARIIRAGNGRGIFIWTIDNLQQEFSVIRLVFGRADAWVDWGNYKADRPLLSLMDMVLSVKGLFRSSGDIVHRSSPTKPLAGNALSDDTNNPSRKERVLKGTVKMVSLLALLTFASSAQAASAPRAVAAKAPAHQPEASDLPPLPALLPATSGAAQAGAGDAGANGPGSPTGQPLAADSADALVENAENTSDTATVHNYTLKDLGAAGSITMRGLAPLQGIEFGIPSDQLVTSARLVLSGSMSPNLRPETNSVTMTLNEQYIGTLRPDPAHPTFGPMSFEINPIFFVSGNRLNFNFASGSKGCSDITNDTLWATISQNSQLQITTIALPPRRLLSRLPQPFYDKNVRQHVTVPMVLAQTYDPQILKSAGILASWFGKQTDFLGVTFPVSSTIPQSGNAILIGVADELPTSLGRPQVNGPAVLELPNPSDANATILVVTGRDRDEVITASKGIAFASAPLPTDSHMDVAPVDIAPRKPNDAPSFIAMDHPVRFGDLVTASKLQGTGFTSGVLSVPFRIPPDLYTWRNRPYKMQVRFRSPAGEAKDVEKSRLDVGINEVYLHSYPLRETHGLVGAVLQGVGLARPASGMQVHDLDVPPWTVFGQDQLNFYFDAMPLARGICQSGAANNAFHLGLDPDSTIDFSRAHHIAQMPNLAYMATVGFPFTTYADLSQTAVVLPEHPNAATVGAYLDLMGFMGAATWYPVAGVDIVSADHVSDVADRNLLVISTLATSGEIAPLLSRSSYEVADGHLRTVSHASALDNAIKAVDDPLTAFRDRDSKPQDVDTPLTGGVGAMIEAESPLTAGRTVLALLSSDGAGLNNLLQMLGERKKQANIQGDLVVAHGEDLSSYRTSPVYTIGTLPLWLWPDWYMHNRPVRVLLVGLLGCILIVSVLARALARHATRRFKQLEDERRKS.

Residues M1–K741 form a catalytic region. 3 helical membrane-spanning segments follow: residues G26–T46, L47–G67, and G106–S126. The interval E147–V240 is catalytic subdomain A. D189 is a catalytic residue. Substrate-binding residues include D236 and D238. Residues T317 to M377 are catalytic subdomain B. D333 is a catalytic residue. 5 helical membrane-spanning segments follow: residues L398–S418, F423–I443, V468–P488, F507–A527, and L547–G567. The PilZ domain maps to Q572–G647. Disordered regions lie at residues S711 to R734 and A768 to A813. The segment at M742 to S1550 is cyclic di-GMP binding domain. Positions A768–A796 are enriched in low complexity. A helical membrane pass occupies residues V1513–A1533.

The protein in the N-terminal section; belongs to the glycosyltransferase 2 family. It in the C-terminal section; belongs to the AcsB/BcsB family. Requires Mg(2+) as cofactor.

Its subcellular location is the cell inner membrane. It catalyses the reaction [(1-&gt;4)-beta-D-glucosyl](n) + UDP-alpha-D-glucose = [(1-&gt;4)-beta-D-glucosyl](n+1) + UDP + H(+). It functions in the pathway glycan metabolism; bacterial cellulose biosynthesis. With respect to regulation, activated by c-di-GMP. Its function is as follows. Bifunctional protein comprised of a catalytic subunit and a regulatory subunit. The catalytic subunit of cellulose synthase polymerizes uridine 5'-diphosphate glucose to cellulose in a processive way. The thick cellulosic mats generated by this enzyme probably provide a specialized protective environment to the bacterium. The regulatory subunit binds bis-(3'-5') cyclic diguanylic acid (c-di-GMP). The polypeptide is Cellulose synthase 1 (acsAB) (Komagataeibacter xylinus (Gluconacetobacter xylinus)).